The sequence spans 2517 residues: Cullin-9 (2517 aa).

K87 is covalently cross-linked (Glycyl lysine isopeptide (Lys-Gly) (interchain with G-Cter in ubiquitin)). Over residues 276–288 (SPELGAGDQSSPC) the composition is skewed to polar residues. The segment at 276–296 (SPELGAGDQSSPCATREKSRG) is disordered. Positions 366-439 (RSEFSSRSGY…HWHMLEILGP (74 aa)) constitute a CPH domain. Residues 576-589 (SNEPSSSSTSRNHS) show a composition bias toward low complexity. The interval 576–639 (SNEPSSSSTS…TETPMAQSDS (64 aa)) is disordered. Residues 593 to 609 (DPEEESKSEASFSEEET) are compositionally biased toward acidic residues. Basic and acidic residues predominate over residues 610-630 (ESLKAKAEAPKTEAEPTKTRT). S976 is modified (phosphoserine). The 180-residue stretch at 1143 to 1322 (PINIPFFDVF…RTCLFYTIRA (180 aa)) folds into the DOC domain. 1363–1370 (AAQALGKT) contacts ATP. Disordered regions lie at residues 1432–1466 (VEPPPGPSPEPSTRPFSKNSKGRDRSPAPSPVLPS) and 1664–1685 (DEEEKRLEEEEEEEEEEEAEKE). Pro residues predominate over residues 1433–1443 (EPPPGPSPEPS). At S1457 the chain carries Phosphoserine. Positions 1649–1691 (LFQLQRLDKLFLEQEDEEEKRLEEEEEEEEEEEAEKELFIEDP) form a coiled coil. Residues 1664–1683 (DEEEKRLEEEEEEEEEEEAE) show a composition bias toward acidic residues. A Glycyl lysine isopeptide (Lys-Gly) (interchain with G-Cter in NEDD8) cross-link involves residue K1881. Residues 2066–2283 (RPDHCPVCVS…KDYYNCSAMV (218 aa)) are TRIAD supradomain. The Zn(2+) site is built by C2070, C2073, C2088, H2090, C2093, C2096, C2115, C2120, C2160, C2166, C2181, C2184, C2189, C2192, H2198, C2203, C2236, and C2239. The segment at 2070-2120 (CPVCVSPLGCDDDLPSLCCMHYCCKSCWNEYLTTRIEQNLVLNCTCPIADC) adopts an RING-type 1 zinc-finger fold. The IBR-type zinc finger occupies 2140-2203 (SKYEKALLRG…FPEAHYPASC (64 aa)). An RING-type 2; atypical zinc finger spans residues 2236–2265 (CPSCQAPIEKNEGCLHMTCAKCNHGFCWRC). C2249 is a catalytic residue. The Zn(2+) site is built by C2254, C2257, C2262, C2265, H2273, and C2279. The stretch at 2365–2385 (VEQQTENLELHTNALQILLEE) forms a coiled coil. S2436 carries the post-translational modification Phosphoserine. Residues 2442 to 2517 (WEAKGPNMPG…EEEDEDEAYD (76 aa)) are disordered. Composition is skewed to acidic residues over residues 2461–2499 (EAEEEEEDDEDDVPEWQQDEFDEELDNDSFSYDESENLD) and 2506–2517 (GDEEEDEDEAYD).

This sequence belongs to the cullin family. Component of the Cul9-RING complex consisting of CUL9 and RBX1; the CUL9-RBX1 complex is a heterododecamer composed of six CUL9 and six RBX1 protomers. Interacts (via C-terminal TRIAD/RBR supradomain) with E2 ubiquitin-conjugating enzyme UBE2L3. Interacts with CUL7; the interaction with the CUL7 component of the 3M complex leads to inhibition of CUL9 activity. The CUL7-CUL9 heterodimer seems to interact specifically with TP53, likely via the CPH domain. Forms a complex with p53/TP53 in the cytoplasm of unstressed cells. Interacts with UBCH7 and UBCH8. In terms of processing, autoubiquitinated by the CUL9-RBX1 complex at Lys-87. Neddylated. Neddylation is mediated by E1 enzyme UBA3-NAE1 complex and E2 enzyme UBE2F. Structural rearrangment of the C-terminal TRIAD/RBR supradomain may play a role in neddylation and deneddylation. In terms of tissue distribution, ubiquitously expressed in all tissues with highest expression in testis brain and kidney.

Its subcellular location is the cytoplasm. Core component of a Cul9-RING ubiquitin-protein ligase complex composed of CUL9 and RBX1. The CUL9-RBX1 complex mediates ubiquitination and subsequent degradation of BIRC5 and is required to maintain microtubule dynamics and genome integrity. Acts downstream of the 3M complex, which inhibits the ubiquitination of BIRC5. The CUL9-RBX1 complex also mediates mono-ubiquitination of p53/TP53. Acts as a cytoplasmic anchor protein in p53/TP53-associated protein complex. Regulates the subcellular localization of p53/TP53 and its subsequent function. Ubiquitinates apurinic/apyrimidinic endodeoxyribonuclease APEX2. Ubiquitination by the CUL9-RBX1 complex is predominantly mediated by E2 ubiquitin-conjugating enzymes UBE2L3 and UBE2D2. The sequence is that of Cullin-9 (CUL9) from Homo sapiens (Human).